The following is a 697-amino-acid chain: General transcription factor IIH subunit 1 (697 aa).

Positions 115 to 136 (LPVSASNGSNTTSPTNGTSPIN) are enriched in low complexity. Disordered regions lie at residues 115–141 (LPVSASNGSNTTSPTNGTSPINGTSPT) and 228–250 (KNDSTRSEKQHTGMPSNLLADVR). BSD domains lie at 174-231 (LSKL…KNDS) and 255-307 (TPNA…YFYR). The segment covering 412 to 422 (KNLKKTKKDEN) has biased composition (basic and acidic residues). The interval 412 to 462 (KNLKKTKKDENSTSTPTTTTTTTNTTNTTNTTTTTTTNNTTIKDPNLYNGD) is disordered. The segment covering 423–452 (STSTPTTTTTTTNTTNTTNTTTTTTTNNTT) has biased composition (low complexity).

This sequence belongs to the TFB1 family. In terms of assembly, component of the 7-subunit TFIIH core complex composed of XPB/repB, XPD/repD, gtf2h1, gtf2h2, gtf2h3, gtf2h4 and gtf2h5, which is active in NER. The core complex associates with the 3-subunit CDK-activating kinase (CAK) module composed of cycH/cyclin H, cdk7 and mnat1 to form the 10-subunit holoenzyme (holo-TFIIH) active in transcription.

The protein resides in the nucleus. Component of the general transcription and DNA repair factor IIH (TFIIH) core complex, which is involved in general and transcription-coupled nucleotide excision repair (NER) of damaged DNA and, when complexed to CAK, in RNA transcription by RNA polymerase II. In NER, TFIIH acts by opening DNA around the lesion to allow the excision of the damaged oligonucleotide and its replacement by a new DNA fragment. In transcription, TFIIH has an essential role in transcription initiation. When the pre-initiation complex (PIC) has been established, TFIIH is required for promoter opening and promoter escape. Phosphorylation of the C-terminal tail (CTD) of the largest subunit of RNA polymerase II by the kinase module CAK controls the initiation of transcription. This chain is General transcription factor IIH subunit 1 (gtf2h1), found in Dictyostelium discoideum (Social amoeba).